A 622-amino-acid polypeptide reads, in one-letter code: Cilia- and flagella-associated protein 206 (622 aa).

It belongs to the CFAP206 family.

The protein localises to the cytoplasm. The protein resides in the cytoskeleton. It localises to the cilium axoneme. It is found in the cilium basal body. Functionally, essential for sperm motility and is involved in the regulation of the beating frequency of motile cilia on the epithelial cells of the respiratory tract. Required for the establishment of radial spokes in sperm flagella. The sequence is that of Cilia- and flagella-associated protein 206 from Bos taurus (Bovine).